The following is a 1342-amino-acid chain: DNA-directed RNA polymerase subunit beta (1342 aa).

It belongs to the RNA polymerase beta chain family. As to quaternary structure, the RNAP catalytic core consists of 2 alpha, 1 beta, 1 beta' and 1 omega subunit. When a sigma factor is associated with the core the holoenzyme is formed, which can initiate transcription.

The catalysed reaction is RNA(n) + a ribonucleoside 5'-triphosphate = RNA(n+1) + diphosphate. DNA-dependent RNA polymerase catalyzes the transcription of DNA into RNA using the four ribonucleoside triphosphates as substrates. The sequence is that of DNA-directed RNA polymerase subunit beta from Pasteurella multocida (strain Pm70).